A 263-amino-acid chain; its full sequence is LIM and SH3 domain protein 1 (263 aa).

N-acetylmethionine is present on methionine 1. Residues 3–63 enclose the LIM zinc-binding domain; it reads PNCARCGKIV…NAHYPKQSFT (61 aa). Lysine 42 carries the N6-acetyllysine modification. 2 Nebulin repeats span residues 64–95 and 97–131; these read MVADTPENLRLKQQSELQSQVRYKEEFEKNKG and GFSVVADTPELQRIKKTQDQISNIKYHEEFEKSRM. Residue threonine 68 is modified to Phosphothreonine. At lysine 75 the chain carries N6-methyllysine. Serine 99 is modified (phosphoserine). Threonine 104 bears the Phosphothreonine mark. Residue lysine 112 is modified to N6-succinyllysine. Serine 118 and serine 134 each carry phosphoserine. Residues 122 to 207 are disordered; sequence YHEEFEKSRM…QRSAPGGGGK (86 aa). The segment covering 148–162 has biased composition (polar residues); sequence DSSSYRRPTEQQQPQ. The region spanning 204–263 is the SH3 domain; it reads GGGKRYRAVYDYSAADEDEVSFQDGDTIVNVQQIDDGWMYGTVERTGDTGMLPANYVEAI.

In terms of assembly, interacts with F-actin. Interacts with ANKRD54. Interacts with KBTBD10. Phosphorylated. As to expression, expressed in a wide range of tissues (but not the heart or skeletal muscle), the expression is specific for certain actin-rich cell types within these tissues. Expression is prominent in the cortical regions of ion-transporting duct cells in the pancreas, in the salivary parotid gland and in certain F-actin-rich cells in the distal tubule/collecting duct. In primary cultures of gastric fibroblasts, expression is mainly within the tips of lamellipodia and at the leading edges of membrane ruffles.

It localises to the cytoplasm. The protein localises to the cell cortex. The protein resides in the cytoskeleton. Its function is as follows. Plays an important role in the regulation of dynamic actin-based, cytoskeletal activities. Agonist-dependent changes in LASP1 phosphorylation may also serve to regulate actin-associated ion transport activities, not only in the parietal cell but also in certain other F-actin-rich secretory epithelial cell types. In Rattus norvegicus (Rat), this protein is LIM and SH3 domain protein 1.